Consider the following 563-residue polypeptide: Inositol-3-phosphate synthase 1-A (563 aa).

The protein belongs to the myo-inositol 1-phosphate synthase family. The cofactor is NAD(+).

Its subcellular location is the cytoplasm. The catalysed reaction is D-glucose 6-phosphate = 1D-myo-inositol 3-phosphate. The protein operates within polyol metabolism; myo-inositol biosynthesis; myo-inositol from D-glucose 6-phosphate: step 1/2. Its function is as follows. Key enzyme in myo-inositol biosynthesis pathway that catalyzes the conversion of glucose 6-phosphate to 1-myo-inositol 1-phosphate in a NAD-dependent manner. Rate-limiting enzyme in the synthesis of all inositol-containing compounds. The chain is Inositol-3-phosphate synthase 1-A (isyna1-a) from Xenopus laevis (African clawed frog).